Consider the following 175-residue polypeptide: Large ribosomal subunit protein uL10 (175 aa).

It belongs to the universal ribosomal protein uL10 family. In terms of assembly, part of the ribosomal stalk of the 50S ribosomal subunit. The N-terminus interacts with L11 and the large rRNA to form the base of the stalk. The C-terminus forms an elongated spine to which L12 dimers bind in a sequential fashion forming a multimeric L10(L12)X complex.

Its function is as follows. Forms part of the ribosomal stalk, playing a central role in the interaction of the ribosome with GTP-bound translation factors. In Halorhodospira halophila (strain DSM 244 / SL1) (Ectothiorhodospira halophila (strain DSM 244 / SL1)), this protein is Large ribosomal subunit protein uL10.